The primary structure comprises 385 residues: tRNA N6-adenosine threonylcarbamoyltransferase (385 aa).

Residues histidine 140, histidine 144, and tyrosine 161 each contribute to the a divalent metal cation site. Substrate is bound by residues 161-165, aspartate 193, glycine 208, glutamate 212, and asparagine 314; that span reads YVSGG. An a divalent metal cation-binding site is contributed by aspartate 343.

It belongs to the KAE1 / TsaD family. In terms of assembly, component of the EKC/KEOPS complex composed of at least BUD32, CGI121, GON7, KAE1 and PCC1; the whole complex dimerizes. A divalent metal cation serves as cofactor.

It localises to the cytoplasm. Its subcellular location is the nucleus. The enzyme catalyses L-threonylcarbamoyladenylate + adenosine(37) in tRNA = N(6)-L-threonylcarbamoyladenosine(37) in tRNA + AMP + H(+). Component of the EKC/KEOPS complex that is required for the formation of a threonylcarbamoyl group on adenosine at position 37 (t(6)A37) in tRNAs that read codons beginning with adenine. The complex is probably involved in the transfer of the threonylcarbamoyl moiety of threonylcarbamoyl-AMP (TC-AMP) to the N6 group of A37. KAE1 likely plays a direct catalytic role in this reaction, but requires other protein(s) of the complex to fulfill this activity. The EKC/KEOPS complex also promotes both telomere uncapping and telomere elongation. The complex is required for efficient recruitment of transcriptional coactivators. This is tRNA N6-adenosine threonylcarbamoyltransferase from Eremothecium gossypii (strain ATCC 10895 / CBS 109.51 / FGSC 9923 / NRRL Y-1056) (Yeast).